We begin with the raw amino-acid sequence, 541 residues long: CTP synthase (541 aa).

The tract at residues 1-271 (MVGKLNPTRF…DTQILKHFDV (271 aa)) is amidoligase domain. A CTP-binding site is contributed by serine 19. Residue serine 19 participates in UTP binding. Residues 20–25 (SLGKGL) and aspartate 77 each bind ATP. Aspartate 77 and glutamate 145 together coordinate Mg(2+). CTP contacts are provided by residues 152 to 154 (DIE), 192 to 197 (KTKPTQ), and lysine 228. Residues 192-197 (KTKPTQ) and lysine 228 each bind UTP. In terms of domain architecture, Glutamine amidotransferase type-1 spans 296-537 (VIAIVGKYVT…VTSTLQVKKA (242 aa)). Residue glycine 355 participates in L-glutamine binding. The active-site Nucleophile; for glutamine hydrolysis is cysteine 382. Residues 383 to 386 (LGMQ), glutamate 406, and arginine 465 each bind L-glutamine. Catalysis depends on residues histidine 510 and glutamate 512.

This sequence belongs to the CTP synthase family. In terms of assembly, homotetramer.

The enzyme catalyses UTP + L-glutamine + ATP + H2O = CTP + L-glutamate + ADP + phosphate + 2 H(+). It catalyses the reaction L-glutamine + H2O = L-glutamate + NH4(+). It carries out the reaction UTP + NH4(+) + ATP = CTP + ADP + phosphate + 2 H(+). It participates in pyrimidine metabolism; CTP biosynthesis via de novo pathway; CTP from UDP: step 2/2. Its activity is regulated as follows. Allosterically activated by GTP, when glutamine is the substrate; GTP has no effect on the reaction when ammonia is the substrate. The allosteric effector GTP functions by stabilizing the protein conformation that binds the tetrahedral intermediate(s) formed during glutamine hydrolysis. Inhibited by the product CTP, via allosteric rather than competitive inhibition. In terms of biological role, catalyzes the ATP-dependent amination of UTP to CTP with either L-glutamine or ammonia as the source of nitrogen. Regulates intracellular CTP levels through interactions with the four ribonucleotide triphosphates. In Anaplasma phagocytophilum (strain HZ), this protein is CTP synthase.